The chain runs to 231 residues: ATP phosphoribosyltransferase (231 aa).

The protein belongs to the ATP phosphoribosyltransferase family. Short subfamily. Heteromultimer composed of HisG and HisZ subunits.

It localises to the cytoplasm. The catalysed reaction is 1-(5-phospho-beta-D-ribosyl)-ATP + diphosphate = 5-phospho-alpha-D-ribose 1-diphosphate + ATP. Its pathway is amino-acid biosynthesis; L-histidine biosynthesis; L-histidine from 5-phospho-alpha-D-ribose 1-diphosphate: step 1/9. Functionally, catalyzes the condensation of ATP and 5-phosphoribose 1-diphosphate to form N'-(5'-phosphoribosyl)-ATP (PR-ATP). Has a crucial role in the pathway because the rate of histidine biosynthesis seems to be controlled primarily by regulation of HisG enzymatic activity. In Brucella suis (strain ATCC 23445 / NCTC 10510), this protein is ATP phosphoribosyltransferase.